The sequence spans 192 residues: MAKVLLIVFIMVYAGSCAIWVSQPPEIRAQEGTTASLPCSFNASRGKAAIGSATWYQDKVAPGMELSNVTPGFRGRVASFSASQFIRGHKAGLLIQDIQSHDARIYVCRVEVLGLGVGTGNGTRLVVEKEPPQQASNAEPERAAYTSLLLRAGVYALSFLSVATGSVIYYQGKCLCHVGNTATPPTASEERF.

The N-terminal stretch at 1 to 18 (MAKVLLIVFIMVYAGSCA) is a signal peptide. The 108-residue stretch at 19 to 126 (IWVSQPPEIR…VGTGNGTRLV (108 aa)) folds into the Ig-like domain. Residues 19 to 147 (IWVSQPPEIR…AEPERAAYTS (129 aa)) are Extracellular-facing. A disulfide bond links Cys-39 and Cys-108. N-linked (GlcNAc...) asparagine glycosylation is found at Asn-42 and Asn-121. Residues 148–168 (LLLRAGVYALSFLSVATGSVI) form a helical membrane-spanning segment. Topologically, residues 169 to 192 (YYQGKCLCHVGNTATPPTASEERF) are cytoplasmic.

The protein belongs to the natural cytotoxicity receptor (NCR) family. In terms of assembly, homodimer in the unliganted form. Interacts with CD3Z. Interacts with and is activated by binding to NCR3LG1. Interacts with and is activated by binding to BAG6. Interacts with and is inhibited by binding to LGALS3.

The protein resides in the cell membrane. Cell membrane receptor of natural killer/NK cells that is activated by binding of extracellular ligands including BAG6 and NCR3LG1. Stimulates NK cells cytotoxicity toward neighboring cells producing these ligands. It controls, for instance, NK cells cytotoxicity against tumor cells. Engagement of NCR3 by BAG6 also promotes myeloid dendritic cells (DC) maturation, both through killing DCs that did not acquire a mature phenotype, and inducing the release by NK cells of TNFA and IFNG that promote DC maturation. In Rattus norvegicus (Rat), this protein is Natural cytotoxicity triggering receptor 3 (Ncr3).